The sequence spans 675 residues: Methionine--tRNA ligase (675 aa).

Positions 15-25 (PYANGSIHLGH) match the 'HIGH' region motif. Residues cysteine 146, cysteine 149, cysteine 159, and cysteine 162 each coordinate Zn(2+). The 'KMSKS' region signature appears at 332–336 (KMSKS). Lysine 335 contributes to the ATP binding site. One can recognise a tRNA-binding domain in the interval 573-675 (DFAKVDMRIA…SGAQPGMQVK (103 aa)).

The protein belongs to the class-I aminoacyl-tRNA synthetase family. MetG type 1 subfamily. As to quaternary structure, homodimer. It depends on Zn(2+) as a cofactor.

It is found in the cytoplasm. It carries out the reaction tRNA(Met) + L-methionine + ATP = L-methionyl-tRNA(Met) + AMP + diphosphate. Functionally, is required not only for elongation of protein synthesis but also for the initiation of all mRNA translation through initiator tRNA(fMet) aminoacylation. This Yersinia pseudotuberculosis serotype IB (strain PB1/+) protein is Methionine--tRNA ligase.